The chain runs to 502 residues: N-fatty-acyl-amino acid synthase/hydrolase PM20D1 (502 aa).

An N-terminal signal peptide occupies residues Met1–Ser25. His125 provides a ligand contact to Zn(2+). Asp127 is an active-site residue. Asp157 contributes to the Zn(2+) binding site. Glu191 (proton acceptor) is an active-site residue. Positions 192 and 217 each coordinate Zn(2+). N-linked (GlcNAc...) asparagine glycosylation is present at Asn252. Zn(2+) is bound at residue His464.

It belongs to the peptidase M20A family. Zn(2+) serves as cofactor.

It localises to the secreted. It carries out the reaction an N-acyl-L-amino acid + H2O = an L-alpha-amino acid + a carboxylate. The catalysed reaction is an N-acyl-aromatic L-alpha-amino acid + H2O = an aromatic L-alpha-amino acid + a carboxylate. The enzyme catalyses L-phenylalanine + (9Z)-octadecenoate = N-(9Z-octadecenoyl)-L-phenylalanine + H2O. It catalyses the reaction N-(9Z-octadecenoyl)-L-leucine + H2O = L-leucine + (9Z)-octadecenoate. It carries out the reaction N-(5Z,8Z,11Z,14Z)-eicosatetraenoyl-glycine + H2O = (5Z,8Z,11Z,14Z)-eicosatetraenoate + glycine. The catalysed reaction is N-hexadecanoyl-L-phenylalanine + H2O = hexadecanoate + L-phenylalanine. The enzyme catalyses N-octadecanoyl-L-phenylalanine + H2O = octadecanoate + L-phenylalanine. It catalyses the reaction N-(4Z,7Z,10Z,13Z,16Z,19Z-docosahexaenoyl)-L-phenylalanine + H2O = (4Z,7Z,10Z,13Z,16Z,19Z)-docosahexaenoate + L-phenylalanine. It carries out the reaction N-(9Z-octadecenoyl)-L-asparagine + H2O = L-asparagine + (9Z)-octadecenoate. The catalysed reaction is (9Z)-octadecenoate + glycine = N-(9Z-octadecenoyl)glycine + H2O. The enzyme catalyses N-(9Z-octadecenoyl)-L-lysine + H2O = L-lysine + (9Z)-octadecenoate. It catalyses the reaction N-(9Z-octadecenoyl)-L-methionine + H2O = (9Z)-octadecenoate + L-methionine. It carries out the reaction N-(9Z-octadecenoyl)-L-serine + H2O = L-serine + (9Z)-octadecenoate. The catalysed reaction is N-(9Z-octadecenoyl)-L-tryptophan + H2O = L-tryptophan + (9Z)-octadecenoate. The enzyme catalyses N-(9Z-octadecenoyl)-L-tyrosine + H2O = L-tyrosine + (9Z)-octadecenoate. It catalyses the reaction N-(9Z-octadecenoyl)-L-glutamine + H2O = L-glutamine + (9Z)-octadecenoate. It carries out the reaction N-(5Z,8Z,11Z,14Z-eicosatetraenoyl)-L-serine + H2O = (5Z,8Z,11Z,14Z)-eicosatetraenoate + L-serine. The catalysed reaction is (5Z,8Z,11Z,14Z)-eicosatetraenoate + L-phenylalanine = N-(5Z,8Z,11Z,14Z-eicosatetraenoyl)-L-phenylalanine + H2O. The protein operates within amino-acid metabolism. It functions in the pathway energy metabolism. Its pathway is lipid metabolism; fatty acid metabolism. With respect to regulation, lipoproteins are powerful coactivators of PM20D1 activity in vitro and NAA biosynthesis in vivo. Its function is as follows. Secreted enzyme that regulates the endogenous N-fatty acyl amino acid (NAAs) tissue and circulating levels by functioning as a bidirectional NAA synthase/hydrolase. It condenses free fatty acids and free amino acids to generate NAAs and bidirectionally catalyzes the reverse hydrolysis reaction. Some of these NAAs stimulate oxidative metabolism via mitochondrial uncoupling, increasing energy expenditure in a UPC1-independent manner. Thereby, this secreted protein may indirectly regulate whole body energy expenditure. PM20D1 circulates in tight association with both low- and high-density (LDL and HDL,respectively) lipoprotein particles. This is N-fatty-acyl-amino acid synthase/hydrolase PM20D1 from Homo sapiens (Human).